We begin with the raw amino-acid sequence, 194 residues long: Large ribosomal subunit protein uL5 (194 aa).

It belongs to the universal ribosomal protein uL5 family. In terms of assembly, part of the 50S ribosomal subunit; part of the 5S rRNA/L5/L18/L25 subcomplex. Contacts the 5S rRNA and the P site tRNA. Forms a bridge to the 30S subunit in the 70S ribosome.

Functionally, this is one of the proteins that bind and probably mediate the attachment of the 5S RNA into the large ribosomal subunit, where it forms part of the central protuberance. In the 70S ribosome it contacts protein S13 of the 30S subunit (bridge B1b), connecting the 2 subunits; this bridge is implicated in subunit movement. Contacts the P site tRNA; the 5S rRNA and some of its associated proteins might help stabilize positioning of ribosome-bound tRNAs. The sequence is that of Large ribosomal subunit protein uL5 from Chlorobium luteolum (strain DSM 273 / BCRC 81028 / 2530) (Pelodictyon luteolum).